Consider the following 164-residue polypeptide: ATP synthase subunit b (164 aa).

Residues 4–24 (LGINPTLFIAQLINFLLLIFI) form a helical membrane-spanning segment.

This sequence belongs to the ATPase B chain family. In terms of assembly, F-type ATPases have 2 components, F(1) - the catalytic core - and F(0) - the membrane proton channel. F(1) has five subunits: alpha(3), beta(3), gamma(1), delta(1), epsilon(1). F(0) has four main subunits: a(1), b(2) and c(10-14). The alpha and beta chains form an alternating ring which encloses part of the gamma chain. F(1) is attached to F(0) by a central stalk formed by the gamma and epsilon chains, while a peripheral stalk is formed by the delta and b chains.

It is found in the cell membrane. Functionally, f(1)F(0) ATP synthase produces ATP from ADP in the presence of a proton or sodium gradient. F-type ATPases consist of two structural domains, F(1) containing the extramembraneous catalytic core and F(0) containing the membrane proton channel, linked together by a central stalk and a peripheral stalk. During catalysis, ATP synthesis in the catalytic domain of F(1) is coupled via a rotary mechanism of the central stalk subunits to proton translocation. Component of the F(0) channel, it forms part of the peripheral stalk, linking F(1) to F(0). This Chloroflexus aurantiacus (strain ATCC 29366 / DSM 635 / J-10-fl) protein is ATP synthase subunit b.